A 506-amino-acid chain; its full sequence is UDP-N-acetylmuramoyl-L-alanyl-D-glutamate--2,6-diaminopimelate ligase (506 aa).

Position 42 (serine 42) interacts with UDP-N-acetyl-alpha-D-muramoyl-L-alanyl-D-glutamate. ATP is bound at residue 125–131; that stretch reads GTSGKTT. Residues 166–167, serine 193, and arginine 201 each bind UDP-N-acetyl-alpha-D-muramoyl-L-alanyl-D-glutamate; that span reads TT. Lysine 233 carries the post-translational modification N6-carboxylysine. Meso-2,6-diaminopimelate is bound by residues arginine 395, 419 to 422, glycine 475, and glutamate 479; that span reads DNPR. The Meso-diaminopimelate recognition motif motif lies at 419 to 422; sequence DNPR.

Belongs to the MurCDEF family. MurE subfamily. It depends on Mg(2+) as a cofactor. Post-translationally, carboxylation is probably crucial for Mg(2+) binding and, consequently, for the gamma-phosphate positioning of ATP.

Its subcellular location is the cytoplasm. The enzyme catalyses UDP-N-acetyl-alpha-D-muramoyl-L-alanyl-D-glutamate + meso-2,6-diaminopimelate + ATP = UDP-N-acetyl-alpha-D-muramoyl-L-alanyl-gamma-D-glutamyl-meso-2,6-diaminopimelate + ADP + phosphate + H(+). Its pathway is cell wall biogenesis; peptidoglycan biosynthesis. Catalyzes the addition of meso-diaminopimelic acid to the nucleotide precursor UDP-N-acetylmuramoyl-L-alanyl-D-glutamate (UMAG) in the biosynthesis of bacterial cell-wall peptidoglycan. The sequence is that of UDP-N-acetylmuramoyl-L-alanyl-D-glutamate--2,6-diaminopimelate ligase from Streptomyces avermitilis (strain ATCC 31267 / DSM 46492 / JCM 5070 / NBRC 14893 / NCIMB 12804 / NRRL 8165 / MA-4680).